We begin with the raw amino-acid sequence, 180 residues long: Large ribosomal subunit protein uL5 (180 aa).

Belongs to the universal ribosomal protein uL5 family. In terms of assembly, part of the 50S ribosomal subunit; part of the 5S rRNA/L5/L18/L25 subcomplex. Contacts the 5S rRNA and the P site tRNA. Forms a bridge to the 30S subunit in the 70S ribosome.

This is one of the proteins that bind and probably mediate the attachment of the 5S RNA into the large ribosomal subunit, where it forms part of the central protuberance. In the 70S ribosome it contacts protein S13 of the 30S subunit (bridge B1b), connecting the 2 subunits; this bridge is implicated in subunit movement. Contacts the P site tRNA; the 5S rRNA and some of its associated proteins might help stabilize positioning of ribosome-bound tRNAs. This Chlamydia trachomatis serovar A (strain ATCC VR-571B / DSM 19440 / HAR-13) protein is Large ribosomal subunit protein uL5.